The following is a 208-amino-acid chain: UPF0301 protein MAB_4928c (208 aa).

Belongs to the UPF0301 (AlgH) family.

In Mycobacteroides abscessus (strain ATCC 19977 / DSM 44196 / CCUG 20993 / CIP 104536 / JCM 13569 / NCTC 13031 / TMC 1543 / L948) (Mycobacterium abscessus), this protein is UPF0301 protein MAB_4928c.